Reading from the N-terminus, the 453-residue chain is Autophagy-related protein 18 (453 aa).

3 WD repeats span residues 9–49, 204–244, and 249–288; these read KSSN…YTNN, AHKT…KLHQ, and SYAA…GAGA. The short motif at 245–249 is the L/FRRG motif element; that stretch reads FRRGS. Residues 284–324 form a disordered region; that stretch reads AGAGAKGRSSSNGGESPSLNSFDGSSDSSSPPGSTTNATRG. Positions 289-320 are enriched in low complexity; that stretch reads KGRSSSNGGESPSLNSFDGSSDSSSPPGSTTN.

It belongs to the WD repeat PROPPIN family. In terms of assembly, component of the PI(3,5)P2 regulatory complex.

The protein localises to the preautophagosomal structure membrane. Its subcellular location is the vacuole membrane. It is found in the endosome membrane. Its function is as follows. The PI(3,5)P2 regulatory complex regulates both the synthesis and turnover of phosphatidylinositol 3,5-bisphosphate (PtdIns(3,5)P2). Necessary for proper vacuole morphology. Plays an important role in osmotically-induced vacuole fragmentation. Required for cytoplasm to vacuole transport (Cvt) vesicle formation, pexophagy and starvation-induced autophagy. Involved in correct ATG9 trafficking to the pre-autophagosomal structure. Might also be involved in premeiotic DNA replication. The chain is Autophagy-related protein 18 (ATG18) from Mycosarcoma maydis (Corn smut fungus).